The chain runs to 339 residues: tRNA dimethylallyltransferase (339 aa).

An ATP-binding site is contributed by 33-40 (GPTASGKT). 35 to 40 (TASGKT) is a binding site for substrate. 2 interaction with substrate tRNA regions span residues 58-61 (DSLL) and 182-186 (QRIQR).

It belongs to the IPP transferase family. As to quaternary structure, monomer. Requires Mg(2+) as cofactor.

The enzyme catalyses adenosine(37) in tRNA + dimethylallyl diphosphate = N(6)-dimethylallyladenosine(37) in tRNA + diphosphate. Catalyzes the transfer of a dimethylallyl group onto the adenine at position 37 in tRNAs that read codons beginning with uridine, leading to the formation of N6-(dimethylallyl)adenosine (i(6)A). This is tRNA dimethylallyltransferase from Acidithiobacillus ferrooxidans (strain ATCC 23270 / DSM 14882 / CIP 104768 / NCIMB 8455) (Ferrobacillus ferrooxidans (strain ATCC 23270)).